Here is a 184-residue protein sequence, read N- to C-terminus: Coordinator of PRMT5 and differentiation stimulator (184 aa).

At M1 the chain carries N-acetylmethionine. Residues 1 to 14 show a composition bias toward low complexity; sequence MDLQAAGAQAQGAA. Positions 1 to 136 are disordered; sequence MDLQAAGAQA…PYDADDIQES (136 aa). Residues 42–56 are compositionally biased toward basic and acidic residues; the sequence is SSQERETEKAMDRLA. Residues S66 and S75 each carry the phosphoserine modification. A compositionally biased stretch (acidic residues) spans 78 to 89; that stretch reads EGFAMDEEDSDG.

In terms of assembly, interacts with PRMT5. Interacts with histone H4; specifically interacts with the N-terminus of histone H4 but not with histone H3. Interacts with CBFB. Found in a complex with PRMT5, RUNX1 and CBFB.

The protein localises to the nucleus. Histone-binding protein required for histone H4 methyltransferase activity of PRMT5. Specifically required for histone H4 'Arg-3' methylation mediated by PRMT5, but not histone H3 'Arg-8' methylation, suggesting that it modulates the substrate specificity of PRMT5. Specifically interacts with the N-terminus of histone H4 but not with histone H3, suggesting that it acts by promoting the association between histone H4 and PRMT5. Involved in CCNE1 promoter repression. Plays a role in muscle cell differentiation by modulating the recruitment of PRMT5 to the promoter of genes involved in the coordination between cell cycle exit and muscle differentiation. The sequence is that of Coordinator of PRMT5 and differentiation stimulator (COPRS) from Homo sapiens (Human).